Consider the following 455-residue polypeptide: MALWGGRFQGETSALFKLFNDSLPVDYRLFEQDVIGSIAWADAIASVGIISATECRDLKKALNDLLVEVNGDPAIILASGAEDIHSFVESALIAKVGDLGKKLHTGRSRNDQVATDLKLWCQSEGAALLARLQSLHAELLALAEREFDAVMPGYTHLQRAQPVTFGHWCLAYVEMYERDISRLADALTRANTCPLGSGALAGTAYKMDRHALAAALNFAAPTLNSLDSVSDRDHVVELCSTASISMMHLSRMAEDLIFFNSGEANFISLSDEVTSGSSLMPQKKNPDALELIRGKTGRVYGSLVGILTTMKALPLAYNKDMQEDKEGLFDVVDSWAICLDMAALVLSGLKVNRPNALLAAQQGYANSTELADYLVSKGMPFREAHHVVGEVVVAAIAKQIPLEEFSLAELKTFAAIIEDDVYPNLTIEACLAKRDVLGGTALPQIQQAIAAKKAR.

Belongs to the lyase 1 family. Argininosuccinate lyase subfamily.

The protein resides in the cytoplasm. The enzyme catalyses 2-(N(omega)-L-arginino)succinate = fumarate + L-arginine. It functions in the pathway amino-acid biosynthesis; L-arginine biosynthesis; L-arginine from L-ornithine and carbamoyl phosphate: step 3/3. The chain is Argininosuccinate lyase from Shewanella baltica (strain OS223).